The following is a 41-amino-acid chain: Peptide Hact-SCRiP1 (41 aa).

4 disulfides stabilise this stretch: Cys5–Cys37, Cys12–Cys31, Cys19–Cys38, and Cys26–Cys39.

Expressed in tentacles.

It is found in the nematocyst. Its subcellular location is the secreted. Its function is as follows. Peptide with unknown function. Does not exhibit any effect on human ion channel TRPV1 in a Xenopus laevis oocytes assay. In Heliofungia actiniformis (Mushroom coral), this protein is Peptide Hact-SCRiP1.